Reading from the N-terminus, the 508-residue chain is MLRRALLCLAVAALVRADAPEEEDHVLVLRKSNFAEALAAHKYLLVEFYAPWCGHCKALAPEYAKAAGKLKAEGSEIRLAKVDATEESDLAQQYGVRGYPTIKFFRNGDTASPKEYTAGREADDIVNWLKKRTGPAATTLPDGAAAESLVESSEVAVIGFFKDVESDSAKQFLQAAEAIDDIPFGITSNSDVFSKYQLDKDGVVLFKKFDEGRNNFEGEVTKENLLDFIKHNQLPLVIEFTEQTAPKIFGGEIKTHILLFLPKSVSDYDGKLSNFKTAAESFKGKILFIFIDSDHTDNQRILEFFGLKKEECPAVRLITLEEEMTKYKPESEELTAERITEFCHRFLEGKIKPHLMSQELPEDWDKQPVKVLVGKNFEDVAFDEKKNVFVEFYAPWCGHCKQLAPIWDKLGETYKDHENIVIAKMDSTANEVEAVKVHSFPTLKFFPASADRTVIDYNGERTLDGFKKFLESGGQDGAGDDDDLEDLEEAEEPDMEEDDDQKAVKDEL.

A signal peptide spans 1–17 (MLRRALLCLAVAALVRA). The region spanning 18–134 (DAPEEEDHVL…IVNWLKKRTG (117 aa)) is the Thioredoxin 1 domain. Catalysis depends on nucleophile residues Cys-53 and Cys-56. An intrachain disulfide couples Cys-53 to Cys-56. Residue Lys-200 is modified to N6-acetyllysine. Residues Lys-222 and Lys-271 each carry the N6-succinyllysine modification. Ser-331 is modified (phosphoserine). The region spanning 349-475 (GKIKPHLMSQ…FKKFLESGGQ (127 aa)) is the Thioredoxin 2 domain. Phosphoserine; by FAM20C is present on Ser-357. Active-site nucleophile residues include Cys-397 and Cys-400. Cys-397 and Cys-400 are oxidised to a cystine. Ser-427 carries the post-translational modification Phosphoserine. The tract at residues 471–508 (ESGGQDGAGDDDDLEDLEEAEEPDMEEDDDQKAVKDEL) is disordered. Positions 478–500 (AGDDDDLEDLEEAEEPDMEEDDD) are enriched in acidic residues. Residues 505 to 508 (KDEL) carry the Prevents secretion from ER motif.

Belongs to the protein disulfide isomerase family. As to quaternary structure, heterodimer; heterodimerizes with the protein microsomal triglyceride transfer MTTP. Homodimer. Monomers and homotetramers may also occur. Interacts with P4HA2, forming a heterotetramer consisting of 2 alpha subunits (P4HA2) and 2 beta (P4HB), where P4HB plays the role of a structural subunit; this tetramer catalyzes the formation of 4-hydroxyproline in collagen. Also constitutes the structural subunit of the microsomal triacylglycerol transfer protein MTTP in mammalian cells. Stabilizes both enzymes and retain them in the ER without contributing to the catalytic activity. Binds UBQLN1. Interacts with ERO1B. Binds to CD4, and upon HIV-1 binding to the cell membrane, is part of a P4HB/PDI-CD4-CXCR4-gp120 complex. Interacts with ILDR2. Interacts with ERN1/IRE1A (via N-terminus); the interaction is enhanced by phosphorylation of P4HB by FAM20C in response to endoplasmic reticulum stress and results in attenuation of ERN1 activity. In terms of processing, phosphorylation of Ser-357 by FAM20C is induced by endoplasmic reticulum stress and results in a functional switch from oxidoreductase to molecular chaperone. It also promotes interaction with ERN1.

The protein localises to the endoplasmic reticulum. It is found in the endoplasmic reticulum lumen. The protein resides in the melanosome. Its subcellular location is the cell membrane. The enzyme catalyses Catalyzes the rearrangement of -S-S- bonds in proteins.. This multifunctional protein catalyzes the formation, breakage and rearrangement of disulfide bonds. At the cell surface, seems to act as a reductase that cleaves disulfide bonds of proteins attached to the cell. May therefore cause structural modifications of exofacial proteins. Inside the cell, seems to form/rearrange disulfide bonds of nascent proteins. At high concentrations and following phosphorylation by FAM20C, functions as a chaperone that inhibits aggregation of misfolded proteins. At low concentrations, facilitates aggregation (anti-chaperone activity). May be involved with other chaperones in the structural modification of the TG precursor in hormone biogenesis. Also acts as a structural subunit of various enzymes such as prolyl 4-hydroxylase and microsomal triacylglycerol transfer protein MTTP. Receptor for LGALS9; the interaction retains P4HB at the cell surface of Th2 T helper cells, increasing disulfide reductase activity at the plasma membrane, altering the plasma membrane redox state and enhancing cell migration. In Homo sapiens (Human), this protein is Protein disulfide-isomerase (P4HB).